The primary structure comprises 184 residues: Shikimate kinase (184 aa).

Glycine 15–serine 20 is an ATP binding site. Residue threonine 19 participates in Mg(2+) binding. Substrate contacts are provided by aspartate 37, arginine 61, and glycine 83. An ATP-binding site is contributed by arginine 123. Arginine 142 contacts substrate.

Belongs to the shikimate kinase family. Monomer. The cofactor is Mg(2+).

It is found in the cytoplasm. The catalysed reaction is shikimate + ATP = 3-phosphoshikimate + ADP + H(+). The protein operates within metabolic intermediate biosynthesis; chorismate biosynthesis; chorismate from D-erythrose 4-phosphate and phosphoenolpyruvate: step 5/7. Catalyzes the specific phosphorylation of the 3-hydroxyl group of shikimic acid using ATP as a cosubstrate. The chain is Shikimate kinase from Coxiella burnetii (strain CbuK_Q154) (Coxiella burnetii (strain Q154)).